A 352-amino-acid chain; its full sequence is Ion-translocating oxidoreductase complex subunit D (352 aa).

5 helical membrane passes run 20 to 40, 42 to 62, 78 to 109, 123 to 143, and 148 to 168; these read IMLL…WFFG, GTLV…ALVL, ALLT…VIIA, PAMI…TSWL, and IAVN…GHTA. Thr187 carries the FMN phosphoryl threonine modification. 5 consecutive transmembrane segments (helical) span residues 214–234, 242–262, 267–287, 301–321, and 322–342; these read ILAG…GVWL, WHIP…GWLF, LAAP…FFIL, LIFG…GGYP, and DGVA…DYYT.

The protein belongs to the NqrB/RnfD family. The complex is composed of six subunits: RsxA, RsxB, RsxC, RsxD, RsxE and RsxG. It depends on FMN as a cofactor.

It is found in the cell inner membrane. In terms of biological role, part of a membrane-bound complex that couples electron transfer with translocation of ions across the membrane. Required to maintain the reduced state of SoxR. This Escherichia coli O6:K15:H31 (strain 536 / UPEC) protein is Ion-translocating oxidoreductase complex subunit D.